We begin with the raw amino-acid sequence, 1303 residues long: DNA-directed RNA polymerase subunit beta'' (1303 aa).

Residues Cys-225, Cys-299, Cys-306, and Cys-309 each contribute to the Zn(2+) site.

It belongs to the RNA polymerase beta' chain family. RpoC2 subfamily. In terms of assembly, in plastids the minimal PEP RNA polymerase catalytic core is composed of four subunits: alpha, beta, beta', and beta''. When a (nuclear-encoded) sigma factor is associated with the core the holoenzyme is formed, which can initiate transcription. Requires Zn(2+) as cofactor.

The protein resides in the plastid. The protein localises to the chloroplast. It catalyses the reaction RNA(n) + a ribonucleoside 5'-triphosphate = RNA(n+1) + diphosphate. DNA-dependent RNA polymerase catalyzes the transcription of DNA into RNA using the four ribonucleoside triphosphates as substrates. The sequence is that of DNA-directed RNA polymerase subunit beta'' from Rhodomonas salina (Cryptomonas salina).